Here is a 211-residue protein sequence, read N- to C-terminus: Large ribosomal subunit protein uL3 (211 aa).

N5-methylglutamine is present on glutamine 150.

This sequence belongs to the universal ribosomal protein uL3 family. In terms of assembly, part of the 50S ribosomal subunit. Forms a cluster with proteins L14 and L19. In terms of processing, methylated by PrmB.

Its function is as follows. One of the primary rRNA binding proteins, it binds directly near the 3'-end of the 23S rRNA, where it nucleates assembly of the 50S subunit. The protein is Large ribosomal subunit protein uL3 of Pseudomonas syringae pv. tomato (strain ATCC BAA-871 / DC3000).